We begin with the raw amino-acid sequence, 141 residues long: Large ribosomal subunit protein uL11 (141 aa).

It belongs to the universal ribosomal protein uL11 family. Part of the ribosomal stalk of the 50S ribosomal subunit. Interacts with L10 and the large rRNA to form the base of the stalk. L10 forms an elongated spine to which L12 dimers bind in a sequential fashion forming a multimeric L10(L12)X complex. In terms of processing, one or more lysine residues are methylated.

Its function is as follows. Forms part of the ribosomal stalk which helps the ribosome interact with GTP-bound translation factors. This Pelodictyon phaeoclathratiforme (strain DSM 5477 / BU-1) protein is Large ribosomal subunit protein uL11.